Reading from the N-terminus, the 383-residue chain is Schlafen-like protein 3 (383 aa).

Residues 118–266 (FDYQSNFSDV…SDKVYQISSG (149 aa)) form an SLFN-like fold region. The chain crosses the membrane as a helical span at residues 354-374 (LLDIQNIGWIFFGTALSFCIY).

Belongs to the Schlafen family. Component of the PUCH (precursor of 21U RNA 5'-end cleavage holoenzyme) complex; consisting of tofu-1, tofu-2 and either slfl-3 or slfl-4. Within the complex, interacts (via N-terminus) with tofu-2 (via N-terminus); the presence of tofu-1 is required for the interaction.

The protein resides in the mitochondrion membrane. Its function is as follows. Component of the trimeric PUCH (precursor of 21U RNA 5'-end cleavage holoenzyme) complex, that acts as an endoribonuclease processing the 5'-end of precursor Piwi-interacting RNAs (piRNAs). The PUCH complex consists of tofu-1, tofu-2 and either slfl-3 or slfl-4, where tofu-2 exhibits endoribonuclease activity. PUCH-mediated processing strictly requires a 7-methyl-G cap (m7 G-cap) and an uracil at position three (U3). PUCH also exhibits a strict bias for piRNA precursors with an A or G at position 1. Mature piRNA production is enhanced by the interaction of PUCH with the PETISCO complex, which is stabilizing piRNA precursors and allows their processing by PUCH. The sequence is that of Schlafen-like protein 3 from Caenorhabditis elegans.